The chain runs to 3230 residues: Helicase SRCAP (3230 aa).

The disordered stretch occupies residues 1–71 (MQSSPSPAHP…GPPDGATVPL (71 aa)). Positions 26–41 (GSNPVSPASSSSPASS) are enriched in low complexity. An HSA domain is found at 124–196 (LPKVPEPPRP…EQAKLRRIAS (73 aa)). Disordered regions lie at residues 253–547 (QPLT…EEDD) and 559–581 (EEQS…LGPK). A compositionally biased stretch (low complexity) spans 257 to 273 (SSKAGSSPCLGSSSAAS). Over residues 283-313 (DDEDGDFQPQEDEEEDDEETIEVEEQQEGND) the composition is skewed to acidic residues. A compositionally biased stretch (basic and acidic residues) spans 315–329 (EAQRREIELLRREGE). Low complexity predominate over residues 337-356 (RSLPPQLLEGPSSPSQTPSS). Over residues 397 to 425 (DEDDEEFTANEEEAEDEEDTIAAEEQLEG) the composition is skewed to acidic residues. The segment covering 426-441 (EVDHAMELSELAREGE) has biased composition (basic and acidic residues). Acidic residues-rich tracts occupy residues 462 to 490 (SEDE…EPPQ), 503 to 517 (RSED…EEET), and 524 to 533 (EESESEESED). The 166-residue stretch at 630–795 (VTMYEKKLNG…WSLMHFLMPH (166 aa)) folds into the Helicase ATP-binding domain. 643–650 (DEMGLGKT) is an ATP binding site. 3 disordered regions span residues 1017–1045 (APLG…PQVL), 1058–1125 (PPLI…PGSS), and 1138–1166 (TFPP…TPAP). Composition is skewed to pro residues over residues 1018 to 1030 (PLGP…PPGP) and 1058 to 1076 (PPLI…PPLQ). Residues 1093 to 1107 (LSGTSRPPTPTLSLK) are compositionally biased toward low complexity. Pro residues predominate over residues 1108–1123 (PTPPAPVRLSPAPPPG). Low complexity predominate over residues 1138–1160 (TFPPAAATTTSTTTATATTTAVP). The residue at position 1172 (Ser-1172) is a Phosphoserine. Disordered stretches follow at residues 1320–1366 (GLTP…APMP), 1406–1425 (SLPG…PLAS), 1629–1760 (VPVM…ASPV), and 1839–1893 (SRLP…EEKR). The segment covering 1323-1336 (PVPPLAPAPRPPSS) has biased composition (pro residues). The segment covering 1337 to 1360 (GLPAVLNPRPTLTPGRLPTPTLGT) has biased composition (low complexity). Residues 1675-1691 (PASTQTLALAPALAPTL) show a composition bias toward low complexity. A compositionally biased stretch (polar residues) spans 1692-1733 (GGSSPSQTLSLGTGNPQGPFPTQTLSLTPASSLVPTPAQTLS). Residues 1750–1760 (PAPPLAPASPV) show a composition bias toward pro residues. Residues 2044–2197 (KLQTLAVLLR…DMAIEGGNFT (154 aa)) form the Helicase C-terminal domain. 6 disordered regions span residues 2214–2233 (LEEP…EETV), 2271–2298 (FNEN…MSRA), 2327–2453 (VSRE…APAA), 2564–2583 (LELA…VPPK), 2598–3081 (KNLS…GRKS), and 3095–3230 (DLAD…KAKT). The segment covering 2215–2225 (EEPSSSSVPSA) has biased composition (low complexity). Basic and acidic residues-rich tracts occupy residues 2284–2298 (EAGR…MSRA), 2327–2358 (VSRE…RLPQ), and 2386–2403 (KAPE…RGAR). Residues 2438 to 2448 (RPAPRPRPTPA) show a composition bias toward pro residues. Composition is skewed to low complexity over residues 2564-2579 (LELA…SLSL) and 2600-2611 (LSLTPSAPSLTL). Over residues 2669–2679 (EADRTSEELTE) the composition is skewed to basic and acidic residues. Residues 2694-2712 (VTAEVAAPSTSSSATSSPE) are compositionally biased toward low complexity. The segment covering 2782–2794 (SETSASPGSPSVR) has biased composition (polar residues). The span at 2807–2817 (GPCEAAPSSSL) shows a compositional bias: low complexity. Positions 2856 to 2868 (VKRRRGRPPKKNR) are enriched in basic residues. The segment at residues 2857–2869 (KRRRGRPPKKNRS) is a DNA-binding region (a.T hook 1). The segment covering 2913-2926 (IPGPQPLGPQPVHR) has biased composition (pro residues). Residues 2936-2948 (KRRRGRPPKARDL) constitute a DNA-binding region (a.T hook 2). The segment covering 2953–2965 (TISSAGDGNSESR) has biased composition (polar residues). Positions 2967–2982 (QPPPHPSPLTPLPPLL) are enriched in pro residues. Over residues 2983–3002 (VCPTATVANTVTTVTISTSP) the composition is skewed to low complexity. Residues 3004–3016 (KRKRGRPPKNPPS) constitute a DNA-binding region (a.T hook 3). The span at 3011–3020 (PKNPPSPRPS) shows a compositional bias: pro residues. Low complexity predominate over residues 3044 to 3053 (PQGQGESEGS). Positions 3168–3184 (SVEESEAEASGEEEEGD) are enriched in acidic residues.

Belongs to the SNF2/RAD54 helicase family. SWR1 subfamily. In terms of assembly, interacts with CREBBP and EP300. May be part of a complex containing SRCAP, CREBBP, CARM1 and GRIP1. Component of the chromatin-remodeling SRCAP complex composed of at least SRCAP, DMAP1, RUVBL1, RUVBL2, ACTL6A, YEATS4, VPS72, ACTR6 and ZNHIT1. Component of a NuA4-related complex which contains EP400, TRRAP/PAF400, SRCAP, BRD8/SMAP, EPC1, DMAP1/DNMAP1, RUVBL1/TIP49, RUVBL2, actin, ACTL6A/BAF53A, VPS72 and YEATS4/GAS41. (Microbial infection) Interacts with hepatitis C virus (HCV) NS5A. As to quaternary structure, (Microbial infection) Interacts with human adenovirus 2 DBP.

It is found in the nucleus. Functionally, catalytic component of the SRCAP complex which mediates the ATP-dependent exchange of histone H2AZ/H2B dimers for nucleosomal H2A/H2B, leading to transcriptional regulation of selected genes by chromatin remodeling. Acts as a coactivator for CREB-mediated transcription, steroid receptor-mediated transcription, and Notch-mediated transcription. The sequence is that of Helicase SRCAP (SRCAP) from Homo sapiens (Human).